Reading from the N-terminus, the 209-residue chain is Vacuolar protein sorting-associated protein 28 homolog (209 aa).

Positions 1–105 (MSQNSNLMRE…REGRPITVKD (105 aa)) constitute a VPS28 N-terminal domain. The 97-residue stretch at 109–205 (NVLKHIASIV…AYQSFQKALN (97 aa)) folds into the VPS28 C-terminal domain.

Belongs to the VPS28 family. In terms of assembly, component of the ESCRT-I complex (endosomal sorting complex required for transport I).

The protein localises to the endosome. Component of the ESCRT-I complex, a regulator of vesicular trafficking process. The sequence is that of Vacuolar protein sorting-associated protein 28 homolog from Caenorhabditis briggsae.